The sequence spans 1138 residues: Pesticidal crystal protein Cry7Ab (1138 aa).

It belongs to the delta endotoxin family.

Its function is as follows. Promotes colloidosmotic lysis by binding to the midgut epithelial cells of Coleoptera. The sequence is that of Pesticidal crystal protein Cry7Ab (cry7Ab) from Bacillus thuringiensis subsp. dakota.